Reading from the N-terminus, the 299-residue chain is Recombination-associated protein RdgC (299 aa).

This sequence belongs to the RdgC family.

The protein resides in the cytoplasm. It is found in the nucleoid. Its function is as follows. May be involved in recombination. This Bordetella bronchiseptica (strain ATCC BAA-588 / NCTC 13252 / RB50) (Alcaligenes bronchisepticus) protein is Recombination-associated protein RdgC.